An 883-amino-acid polypeptide reads, in one-letter code: Translation initiation factor IF-2 (883 aa).

Disordered regions lie at residues Met1–Met96 and Gln132–Leu259. Residues Pro57–Glu66 show a composition bias toward low complexity. Residues Thr72–Ser87 show a composition bias toward pro residues. Positions Gln132–Asp188 are enriched in basic and acidic residues. The span at Pro191–Glu217 shows a compositional bias: low complexity. One can recognise a tr-type G domain in the interval Pro380–Lys551. Residues Gly389–Thr396 form a G1 region. A GTP-binding site is contributed by Gly389 to Thr396. Residues Gly414–His418 are G2. Residues Asp437–Gly440 form a G3 region. Residues Asp437–His441 and Asn491–Asp494 contribute to the GTP site. A G4 region spans residues Asn491–Asp494. The interval Ser527–Lys529 is G5.

This sequence belongs to the TRAFAC class translation factor GTPase superfamily. Classic translation factor GTPase family. IF-2 subfamily.

The protein resides in the cytoplasm. Its function is as follows. One of the essential components for the initiation of protein synthesis. Protects formylmethionyl-tRNA from spontaneous hydrolysis and promotes its binding to the 30S ribosomal subunits. Also involved in the hydrolysis of GTP during the formation of the 70S ribosomal complex. The protein is Translation initiation factor IF-2 of Rhodopseudomonas palustris (strain BisB5).